We begin with the raw amino-acid sequence, 296 residues long: Decaprenyl diphosphate synthase (296 aa).

Positions 1-24 are disordered; the sequence is MARDARKRTSSNFPQLPPAPDDYP. The active site involves Asp76. Asp76 contacts Mg(2+). Residues 76-80, Trp81, Arg89, His93, 121-124, Trp125, Arg127, Arg168, Arg244, and 250-252 contribute to the substrate site; these read DGNGR, STEN, and RSS. Asn124 (proton acceptor) is an active-site residue. Glu263 contributes to the Mg(2+) binding site. Residue 292 to 294 participates in substrate binding; the sequence is RFG.

Belongs to the UPP synthase family. Homodimer. It depends on Mg(2+) as a cofactor. Requires Mn(2+) as cofactor.

The protein resides in the cell membrane. It catalyses the reaction (2Z,6E)-farnesyl diphosphate + 7 isopentenyl diphosphate = (2Z,6Z,10Z,14Z,18Z,22Z,26Z,30Z,34E)-decaprenyl diphosphate + 7 diphosphate. The enzyme catalyses n isopentenyl diphosphate + (2E,6E)-farnesyl diphosphate = a di-trans,poly-cis-polyprenyl diphosphate + n diphosphate. With respect to regulation, activated by dithiothreitol and inhibited by EDTA. Catalyzes the sequential condensation of isopentenyl diphosphate (IPP) in the cis configuration with (2Z,6E)-farnesyl diphosphate (Z-FPP or EZ-FPP) generating the 50 carbon product trans,polycis-decaprenyl diphosphate. When (2E,6E)-farnesyl diphosphate (E-FPP or EE-FPP) is used in vitro, both primary products decaprenyl diphosphate and (2E,6E,10E)-geranylgeranyl diphosphate (EEE-GGPP) are synthesized. M.tuberculosis does not synthesize (2E,6E,10Z)-geranylgeranyl diphosphate (EEZ-GGPP) and heptaprenyl diphosphate. Can also accept many different allylic substrates, including E-geranyl diphosphate (E-GPP), neryl diphosphate (NPP), and all-trans-geranyl-geranyl diphosphate. This chain is Decaprenyl diphosphate synthase (uppS), found in Mycobacterium tuberculosis (strain ATCC 25618 / H37Rv).